A 180-amino-acid chain; its full sequence is Urease accessory protein UreE (180 aa).

A disordered region spans residues Ala71 to Gly90.

The protein belongs to the UreE family.

The protein resides in the cytoplasm. Its function is as follows. Involved in urease metallocenter assembly. Binds nickel. Probably functions as a nickel donor during metallocenter assembly. This chain is Urease accessory protein UreE, found in Kocuria rhizophila (strain ATCC 9341 / DSM 348 / NBRC 103217 / DC2201).